We begin with the raw amino-acid sequence, 692 residues long: DNA repair protein RAD34 (692 aa).

The interval 1-38 (MAKRLLESSQNDQANRKNSKIEKKEVSFYEEEETDDSF) is disordered. A compositionally biased stretch (acidic residues) spans 28-38 (FYEEEETDDSF).

The protein belongs to the XPC family.

Its subcellular location is the nucleus. Its function is as follows. Involved in nucleotide excision repair (NER) of damaged ribosomal DNA (rDNA). Required for the repair of the RNA polymerase I-transcribed strand of rDNA. The sequence is that of DNA repair protein RAD34 (RAD34) from Saccharomyces cerevisiae (strain ATCC 204508 / S288c) (Baker's yeast).